Consider the following 401-residue polypeptide: uncharacterized protein (401 aa).

Residues cysteine 7, cysteine 13, cysteine 16, and cysteine 94 each contribute to the [4Fe-4S] cluster site. Glutamine 230, tyrosine 259, glutamate 280, and aspartate 328 together coordinate S-adenosyl-L-methionine. The Nucleophile role is filled by cysteine 355.

This sequence belongs to the class I-like SAM-binding methyltransferase superfamily. RNA M5U methyltransferase family.

This is an uncharacterized protein from Chlamydia caviae (strain ATCC VR-813 / DSM 19441 / 03DC25 / GPIC) (Chlamydophila caviae).